The chain runs to 498 residues: L-amino acid oxidase Cdc18 (498 aa).

A signal peptide spans Ser1–Cys2. Cys12 and Cys173 are disulfide-bonded. FAD is bound by residues Met45 to Ala46, Glu65 to Ala66, Arg73, and Gly87 to Arg90. Residues Arg90 and His223 each coordinate substrate. Residue Val263 participates in FAD binding. Cys333 and Cys414 are disulfide-bonded. An N-linked (GlcNAc...) asparagine glycan is attached at Asn363. Tyr374 is a substrate binding site. FAD is bound by residues Glu459 and Gly466 to Thr471. Gly466–Trp467 is a substrate binding site.

Belongs to the flavin monoamine oxidase family. FIG1 subfamily. Monomer. This is in contrast with most of its orthologs, that are non-covalently linked homodimers. FAD is required as a cofactor. Expressed by the venom gland.

The protein localises to the secreted. It carries out the reaction an L-alpha-amino acid + O2 + H2O = a 2-oxocarboxylate + H2O2 + NH4(+). The catalysed reaction is L-leucine + O2 + H2O = 4-methyl-2-oxopentanoate + H2O2 + NH4(+). Catalyzes an oxidative deamination of predominantly hydrophobic and aromatic L-amino acids, thus producing hydrogen peroxide that may contribute to the diverse toxic effects of this enzyme. Shows activity on L-Leu. Damages cell membranes of the Gram-positive bacteria S.aureus (MIC=8 ug/ml and MBC=16 ug/ml) and the Gram-negative bacteria A.baumannii (MIC=16 ug/ml and MBC=32 ug/ml). This antimicrobial activity is dependent on the production of hydrogen peroxyde, since it is inhibited by catalase, a hydrogen peroxyde scavenger. The polypeptide is L-amino acid oxidase Cdc18 (Crotalus durissus cumanensis (South American rattlesnake)).